Here is a 445-residue protein sequence, read N- to C-terminus: Ribosome biogenesis protein YTM1 (445 aa).

Residues 8–89 (VKVKFFTREQ…EAVLNVEYTR (82 aa)) form a ubiquitin-like (UBL) domain region. The sufficient for interaction with ERB1 and association with 66S pre-ribosomes stretch occupies residues 99 to 445 (SFSNEDWVSA…FNKGDNIFKN (347 aa)). WD repeat units lie at residues 101–138 (SNED…EKQY), 140–178 (GHTG…VKHV), 195–232 (GHQA…MTAV), 270–310 (SHKA…CVDT), 312–351 (STSY…SAKI), 358–398 (GHKN…SIYT), and 409–445 (GIND…IFKN).

The protein belongs to the WD repeat WDR12/YTM1 family. Component of the NOP7 complex, composed of ERB1, NOP7 and YTM1. The complex is held together by ERB1, which interacts with NOP7 via its N-terminal domain and with YTM1 via a high-affinity interaction between the seven-bladed beta-propeller domains of the 2 proteins. The NOP7 complex associates with the 66S pre-ribosome. Interacts (via UBL domain) with MDN1 (via VWFA/MIDAS domain).

It is found in the nucleus. Its subcellular location is the nucleolus. The protein resides in the nucleoplasm. Its function is as follows. Component of the NOP7 complex, which is required for maturation of the 25S and 5.8S ribosomal RNAs and formation of the 60S ribosome. The chain is Ribosome biogenesis protein YTM1 from Eremothecium gossypii (strain ATCC 10895 / CBS 109.51 / FGSC 9923 / NRRL Y-1056) (Yeast).